The sequence spans 676 residues: Probable ERAD-associated E3 ubiquitin-protein ligase ASI1 (676 aa).

At 1-78 the chain is on the perinuclear space side; the sequence is MSTNILQHVK…TLQLAKVGIR (78 aa). 4 N-linked (GlcNAc...) asparagine glycosylation sites follow: N24, N34, N46, and N66. The chain crosses the membrane as a helical span at residues 79–99; it reads MFFSYSVSKYAVLCFSTAIIL. Residues 100–126 lie on the Nuclear side of the membrane; that stretch reads NRLTVMSSLRSNSTNIRLPLWSKTLLH. The chain crosses the membrane as a helical span at residues 127 to 147; the sequence is LVATLSLVKALLQILSQFGLM. The Perinuclear space portion of the chain corresponds to 148 to 156; the sequence is HELHVSDTD. The chain crosses the membrane as a helical span at residues 157 to 177; sequence FYALSVYLFVALSDCIEIFIS. Residues 178–181 are Nuclear-facing; sequence STTN. Residues 182-202 form a helical membrane-spanning segment; it reads VPSLICSDFSIWGLSLNLYII. The Perinuclear space portion of the chain corresponds to 203–277; it reads SKMPAGQQHI…NICLIHNYFP (75 aa). The helical transmembrane segment at 278–298 threads the bilayer; the sequence is GFFYISTILLASIGIFLKALF. The Nuclear portion of the chain corresponds to 299 to 676; it reads TSNPFRSLYS…VKGYSKLNIV (378 aa). Residues 624–664 form an RING-type; atypical zinc finger; it reads CLICKVNKRNIVTWPCRCLALCDDCRISLGYKGFATCVSCD.

In terms of assembly, component of the Asi complex, which contains ASI1, ASI2 and ASI3. Interacts directly with ASI1.

It localises to the nucleus inner membrane. The enzyme catalyses S-ubiquitinyl-[E2 ubiquitin-conjugating enzyme]-L-cysteine + [acceptor protein]-L-lysine = [E2 ubiquitin-conjugating enzyme]-L-cysteine + N(6)-ubiquitinyl-[acceptor protein]-L-lysine.. Functionally, part of the nuclear inner membrane (INM)-specific branch of the ER-associated degradation (ERAD) pathway, required for the elimination of misfolded proteins in the INM, a specialized ER subdomain. Required for ERG11 degradation. Negative regulator of SPS-sensor signaling. Together with ASI2 and ASI3, prevents the unprocessed precursor forms of STP1 and STP2 that escape cytoplasmic anchoring from inducing SPS-sensor-regulated genes in the absence of inducing signals. Controls amino acid permease (AAP) gene expression in response to amino acid availability, a process mediated by the transcription factors STP1 and STP1. The protein is Probable ERAD-associated E3 ubiquitin-protein ligase ASI1 (ASI3) of Saccharomyces cerevisiae (strain ATCC 204508 / S288c) (Baker's yeast).